We begin with the raw amino-acid sequence, 274 residues long: MAHYFVGDIQGCFAELQKLLAKVDFNPSRDELWAVGDLVARGPDSLATLRFFRSLGDSAKTVLGNHDLHLMALHGKLKRAKPSDNLTEILESPDISASIDWLRQQPLMRELPEHQLIMSHAGVPPQWSLEVLREEAALVSCALKQDDYLEALISQMYSDSAEQWDPSAIGIERLRYCINALTRMRYLYVDGRLDFDCKQPPENCTNPQLKPWFEFASPLRQSHTLVFGHWAALMGNVGDSKLKALDTGCCWGEHLTLWHLEKDQKITQKKLKKS.

It belongs to the Ap4A hydrolase family.

It catalyses the reaction P(1),P(4)-bis(5'-adenosyl) tetraphosphate + H2O = 2 ADP + 2 H(+). In terms of biological role, hydrolyzes diadenosine 5',5'''-P1,P4-tetraphosphate to yield ADP. The chain is Bis(5'-nucleosyl)-tetraphosphatase, symmetrical from Shewanella baltica (strain OS195).